Here is a 375-residue protein sequence, read N- to C-terminus: Guanine nucleotide-binding protein subunit beta (375 aa).

7 WD repeats span residues 63–93 (GHTG…IVWN), 105–135 (LPCA…SIYN), 154–185 (GHKG…VLWD), 202–233 (GHTA…RLWD), 246–276 (GHEG…RLFD), 293–323 (GDIP…YVWD), and 339–369 (SHEG…KIWA).

Belongs to the WD repeat G protein beta family. As to quaternary structure, g proteins are composed of 3 units, alpha, beta and gamma.

Guanine nucleotide-binding proteins (G proteins) are involved as a modulator or transducer in various transmembrane signaling systems. The beta and gamma chains are required for the GTPase activity, for replacement of GDP by GTP, and for G protein-effector interaction. The chain is Guanine nucleotide-binding protein subunit beta from Nicotiana tabacum (Common tobacco).